Consider the following 588-residue polypeptide: bZip transcription factor GAP1 (588 aa).

A disordered region spans residues 1 to 49 (MAEVDNGGAQKSSASRKKRYQELDPETRMKRVAQNRAAQKAFRERKERK). Over residues 20 to 29 (YQELDPETRM) the composition is skewed to basic and acidic residues. The region spanning 25-88 (PETRMKRVAQ…SILVKELRKY (64 aa)) is the bZIP domain. The segment at 28 to 51 (RMKRVAQNRAAQKAFRERKERKMK) is basic motif. The interval 53-60 (LERKVVDL) is leucine-zipper. Residues 164 to 174 (FNVTGQLTPPG) show a composition bias toward polar residues. A disordered region spans residues 164-219 (FNVTGQLTPPGNTSSSTTANSVAANAKKQSIPHSDSSDSNESKNTWNTDPTSSEDW). Low complexity predominate over residues 175 to 189 (NTSSSTTANSVAANA). Transcription activation regions lie at residues 189-327 (AKKQ…SNTW) and 376-477 (GRTQ…MQTE). Polar residues predominate over residues 190–217 (KKQSIPHSDSSDSNESKNTWNTDPTSSE). Residues 253–265 (CTKLNQACGTKAC) form a n-CRD region. The segment at 487 to 529 (DMLNSSRMKETIDNQNIGEKTTKDDNEDDDEDDENDNTVVPSR) is disordered. Positions 511 to 522 (DNEDDDEDDEND) are enriched in acidic residues. A c-CRD region spans residues 536–567 (CSEIWDRITAHPKYSDIDIDGLCSELMAKAKC). Positions 552 to 559 (IDIDGLCS) match the Nuclear export signal motif.

Its subcellular location is the nucleus. Transcription factor that plays a critical role in response to various stresses and reduces the stress through transcriptional activation of its target genes including multidrug transporter FLR1. The chain is bZip transcription factor GAP1 from Candida glabrata (strain ATCC 2001 / BCRC 20586 / JCM 3761 / NBRC 0622 / NRRL Y-65 / CBS 138) (Yeast).